We begin with the raw amino-acid sequence, 577 residues long: Arginine--tRNA ligase (577 aa).

A 'HIGH' region motif is present at residues 122-132 (PNVAKEMHVGH).

The protein belongs to the class-I aminoacyl-tRNA synthetase family. In terms of assembly, monomer.

The protein localises to the cytoplasm. The enzyme catalyses tRNA(Arg) + L-arginine + ATP = L-arginyl-tRNA(Arg) + AMP + diphosphate. This Aliivibrio fischeri (strain MJ11) (Vibrio fischeri) protein is Arginine--tRNA ligase.